The sequence spans 307 residues: Oxygen-dependent coproporphyrinogen-III oxidase (307 aa).

Substrate is bound at residue S99. 2 residues coordinate a divalent metal cation: H103 and H113. Residue H113 is the Proton donor of the active site. 115-117 (NVR) provides a ligand contact to substrate. 2 residues coordinate a divalent metal cation: H152 and H182. The interval 247 to 282 (YVEFNLVFDRGTLFGLQSGGRTESILMSMPPVANWR) is important for dimerization. 265–267 (GGR) provides a ligand contact to substrate.

This sequence belongs to the aerobic coproporphyrinogen-III oxidase family. Homodimer. Requires a divalent metal cation as cofactor.

It is found in the cytoplasm. The enzyme catalyses coproporphyrinogen III + O2 + 2 H(+) = protoporphyrinogen IX + 2 CO2 + 2 H2O. Its pathway is porphyrin-containing compound metabolism; protoporphyrin-IX biosynthesis; protoporphyrinogen-IX from coproporphyrinogen-III (O2 route): step 1/1. Functionally, involved in the heme biosynthesis. Catalyzes the aerobic oxidative decarboxylation of propionate groups of rings A and B of coproporphyrinogen-III to yield the vinyl groups in protoporphyrinogen-IX. In Burkholderia orbicola (strain MC0-3), this protein is Oxygen-dependent coproporphyrinogen-III oxidase.